Reading from the N-terminus, the 306-residue chain is UDP-3-O-acyl-N-acetylglucosamine deacetylase (306 aa).

3 residues coordinate Zn(2+): His-79, His-238, and Asp-242. Catalysis depends on His-265, which acts as the Proton donor.

Belongs to the LpxC family. Requires Zn(2+) as cofactor.

It carries out the reaction a UDP-3-O-[(3R)-3-hydroxyacyl]-N-acetyl-alpha-D-glucosamine + H2O = a UDP-3-O-[(3R)-3-hydroxyacyl]-alpha-D-glucosamine + acetate. It functions in the pathway glycolipid biosynthesis; lipid IV(A) biosynthesis; lipid IV(A) from (3R)-3-hydroxytetradecanoyl-[acyl-carrier-protein] and UDP-N-acetyl-alpha-D-glucosamine: step 2/6. Functionally, catalyzes the hydrolysis of UDP-3-O-myristoyl-N-acetylglucosamine to form UDP-3-O-myristoylglucosamine and acetate, the committed step in lipid A biosynthesis. The polypeptide is UDP-3-O-acyl-N-acetylglucosamine deacetylase (Hamiltonella defensa subsp. Acyrthosiphon pisum (strain 5AT)).